Reading from the N-terminus, the 446-residue chain is Na(+)-translocating NADH-quinone reductase subunit A (446 aa).

Belongs to the NqrA family. Composed of six subunits; NqrA, NqrB, NqrC, NqrD, NqrE and NqrF.

It carries out the reaction a ubiquinone + n Na(+)(in) + NADH + H(+) = a ubiquinol + n Na(+)(out) + NAD(+). Its function is as follows. NQR complex catalyzes the reduction of ubiquinone-1 to ubiquinol by two successive reactions, coupled with the transport of Na(+) ions from the cytoplasm to the periplasm. NqrA to NqrE are probably involved in the second step, the conversion of ubisemiquinone to ubiquinol. The protein is Na(+)-translocating NADH-quinone reductase subunit A of Pasteurella multocida (strain Pm70).